We begin with the raw amino-acid sequence, 351 residues long: Phosphoribosylformylglycinamidine cyclo-ligase (351 aa).

Belongs to the AIR synthase family.

It is found in the cytoplasm. It carries out the reaction 2-formamido-N(1)-(5-O-phospho-beta-D-ribosyl)acetamidine + ATP = 5-amino-1-(5-phospho-beta-D-ribosyl)imidazole + ADP + phosphate + H(+). It functions in the pathway purine metabolism; IMP biosynthesis via de novo pathway; 5-amino-1-(5-phospho-D-ribosyl)imidazole from N(2)-formyl-N(1)-(5-phospho-D-ribosyl)glycinamide: step 2/2. The protein is Phosphoribosylformylglycinamidine cyclo-ligase of Azotobacter vinelandii (strain DJ / ATCC BAA-1303).